We begin with the raw amino-acid sequence, 684 residues long: Cleavage and polyadenylation specificity factor subunit 3 (684 aa).

At S2 the chain carries N-acetylserine. H71, H73, D75, H76, H158, and D179 together coordinate Zn(2+). Catalysis depends on H396, which acts as the Proton donor. A Zn(2+)-binding site is contributed by H418. Glycyl lysine isopeptide (Lys-Gly) (interchain with G-Cter in SUMO) cross-links involve residues K462, K465, and K545. Position 659 is a phosphoserine (S659). Phosphothreonine is present on T681.

It belongs to the metallo-beta-lactamase superfamily. RNA-metabolizing metallo-beta-lactamase-like family. CPSF3 subfamily. Component of the cleavage and polyadenylation specificity factor (CPSF) complex, composed of CPSF1, CPSF2, CPSF3, CPSF4 and FIP1L1. Interacts with CPSF2, CSTF2 and SYMPK. Interacts with TUT1; the interaction is direct and mediates the recruitment of the CPSF complex on the 3'UTR of pre-mRNAs. Interacts with WDR33. Interacts with ZC3H3. The cofactor is Zn(2+). Post-translationally, sumoylated on Lys-462, Lys-465 and Lys-545, preferentially by SUMO3.

It localises to the nucleus. Its function is as follows. Component of the cleavage and polyadenylation specificity factor (CPSF) complex that plays a key role in pre-mRNA 3'-end formation, recognizing the AAUAAA signal sequence and interacting with poly(A) polymerase and other factors to bring about cleavage and poly(A) addition. Has endonuclease activity, and functions as an mRNA 3'-end-processing endonuclease. Also involved in the histone 3'-end pre-mRNA processing. U7 snRNP-dependent protein that induces both the 3'-endoribonucleolytic cleavage of histone pre-mRNAs and acts as a 5' to 3' exonuclease for degrading the subsequent downstream cleavage product (DCP) of mature histone mRNAs. Cleavage occurs after the 5'-ACCCA-3' sequence in the histone pre-mRNA leaving a 3'hydroxyl group on the upstream fragment containing the stem loop (SL) and 5' phosphate on the downstream cleavage product (DCP) starting with CU nucleotides. The U7-dependent 5' to 3' exonuclease activity is processive and degrades the DCP RNA substrate even after complete removal of the U7-binding site. Binds to the downstream cleavage product (DCP) of histone pre-mRNAs and the cleaved DCP RNA substrate in a U7 snRNP dependent manner. Required for entering/progressing through S-phase of the cell cycle. Required for the selective processing of microRNAs (miRNAs) during embryonic stem cell differentiation via its interaction with ISY1. Required for the biogenesis of all miRNAs from the pri-miR-17-92 primary transcript except miR-92a. Only required for the biogenesis of miR-290 and miR-96 from the pri-miR-290-295 and pri-miR-96-183 primary transcripts, respectively. The protein is Cleavage and polyadenylation specificity factor subunit 3 (CPSF3) of Bos taurus (Bovine).